The chain runs to 161 residues: 2-C-methyl-D-erythritol 2,4-cyclodiphosphate synthase (161 aa).

A divalent metal cation is bound by residues aspartate 10 and histidine 12. 4-CDP-2-C-methyl-D-erythritol 2-phosphate is bound by residues aspartate 10 to histidine 12 and histidine 36 to serine 37. Residue histidine 44 coordinates a divalent metal cation. 4-CDP-2-C-methyl-D-erythritol 2-phosphate is bound by residues aspartate 58–glycine 60, phenylalanine 63–aspartate 67, and arginine 144.

This sequence belongs to the IspF family. Homotrimer. It depends on a divalent metal cation as a cofactor.

The enzyme catalyses 4-CDP-2-C-methyl-D-erythritol 2-phosphate = 2-C-methyl-D-erythritol 2,4-cyclic diphosphate + CMP. The protein operates within isoprenoid biosynthesis; isopentenyl diphosphate biosynthesis via DXP pathway; isopentenyl diphosphate from 1-deoxy-D-xylulose 5-phosphate: step 4/6. Functionally, involved in the biosynthesis of isopentenyl diphosphate (IPP) and dimethylallyl diphosphate (DMAPP), two major building blocks of isoprenoid compounds. Catalyzes the conversion of 4-diphosphocytidyl-2-C-methyl-D-erythritol 2-phosphate (CDP-ME2P) to 2-C-methyl-D-erythritol 2,4-cyclodiphosphate (ME-CPP) with a corresponding release of cytidine 5-monophosphate (CMP). The chain is 2-C-methyl-D-erythritol 2,4-cyclodiphosphate synthase from Burkholderia lata (strain ATCC 17760 / DSM 23089 / LMG 22485 / NCIMB 9086 / R18194 / 383).